The chain runs to 576 residues: Proton pump-interactor 3B (576 aa).

A disordered region spans residues 34–63 (SEVTTDEEEDTIFSGGDSSSGLAAEEDSSG). Coiled coils occupy residues 132 to 155 (RMVIEEKKKEFDTLLEALRNLRCT) and 205 to 241 (EKEASINRVKSMALELNEVKNELDAITWKINDLSDKL). A compositionally biased stretch (basic and acidic residues) spans 369–381 (RSEKVHKMNREDS). Residues 369 to 395 (RSEKVHKMNREDSSSNSSEDGNVITDK) form a disordered region. Residues 411 to 467 (KKKEEEIDEEALKERKREEQLEKARLVMERKRKLQEKAAAKAAIRAQKEAEKKLKAI) adopt a coiled-coil conformation. A helical transmembrane segment spans residues 555-575 (WVWGLSSAALAVSLVLVVLLL).

The protein belongs to the plant Proton pump-interactor protein family.

Its subcellular location is the cell membrane. The protein resides in the endoplasmic reticulum membrane. May regulate plasma membrane ATPase activity. This chain is Proton pump-interactor 3B (PPI3B), found in Arabidopsis thaliana (Mouse-ear cress).